The following is a 317-amino-acid chain: Putative 2-hydroxyacid dehydrogenase SA2098 (317 aa).

Residues 155–156, 234–236, and Asp-260 contribute to the NAD(+) site; these read EI and ASR. Residue Arg-236 is part of the active site. Residue Glu-265 is part of the active site. The active-site Proton donor is His-283. 283–286 is a binding site for NAD(+); sequence HIGN.

It belongs to the D-isomer specific 2-hydroxyacid dehydrogenase family.

The polypeptide is Putative 2-hydroxyacid dehydrogenase SA2098 (Staphylococcus aureus (strain N315)).